A 391-amino-acid polypeptide reads, in one-letter code: Phosphoglycerate kinase (391 aa).

Substrate-binding positions include 21–23, Arg-36, 59–62, Arg-113, and Arg-146; these read DLN and HLGR. ATP-binding positions include Lys-197, Glu-319, and 345–348; that span reads GGDT.

Belongs to the phosphoglycerate kinase family. In terms of assembly, monomer.

It is found in the cytoplasm. It catalyses the reaction (2R)-3-phosphoglycerate + ATP = (2R)-3-phospho-glyceroyl phosphate + ADP. The protein operates within carbohydrate degradation; glycolysis; pyruvate from D-glyceraldehyde 3-phosphate: step 2/5. The sequence is that of Phosphoglycerate kinase from Shewanella baltica (strain OS195).